A 251-amino-acid chain; its full sequence is Probable transcriptional regulatory protein Francci3_1368 (251 aa).

Belongs to the TACO1 family.

It localises to the cytoplasm. In Frankia casuarinae (strain DSM 45818 / CECT 9043 / HFP020203 / CcI3), this protein is Probable transcriptional regulatory protein Francci3_1368.